A 527-amino-acid polypeptide reads, in one-letter code: Bifunctional purine biosynthesis protein PurH (527 aa).

Residues 1 to 144 form the MGS-like domain; that stretch reads MNRRALISVS…KNHESVAIIV (144 aa).

It belongs to the PurH family.

It catalyses the reaction (6R)-10-formyltetrahydrofolate + 5-amino-1-(5-phospho-beta-D-ribosyl)imidazole-4-carboxamide = 5-formamido-1-(5-phospho-D-ribosyl)imidazole-4-carboxamide + (6S)-5,6,7,8-tetrahydrofolate. The catalysed reaction is IMP + H2O = 5-formamido-1-(5-phospho-D-ribosyl)imidazole-4-carboxamide. Its pathway is purine metabolism; IMP biosynthesis via de novo pathway; 5-formamido-1-(5-phospho-D-ribosyl)imidazole-4-carboxamide from 5-amino-1-(5-phospho-D-ribosyl)imidazole-4-carboxamide (10-formyl THF route): step 1/1. It participates in purine metabolism; IMP biosynthesis via de novo pathway; IMP from 5-formamido-1-(5-phospho-D-ribosyl)imidazole-4-carboxamide: step 1/1. This Heliobacterium modesticaldum (strain ATCC 51547 / Ice1) protein is Bifunctional purine biosynthesis protein PurH.